The following is a 328-amino-acid chain: Homoarginine-6-hydroxylase 2-ODD-233 (328 aa).

One can recognise a Fe2OG dioxygenase domain in the interval 183 to 288 (FWVCRLIGYP…VSVAFFYESN (106 aa)). 3 residues coordinate Fe cation: histidine 210, aspartate 212, and histidine 268. Position 278 (arginine 278) interacts with 2-oxoglutarate.

It belongs to the iron/ascorbate-dependent oxidoreductase family. It depends on Fe(2+) as a cofactor. L-ascorbate is required as a cofactor. As to expression, expressed in roots and shoots.

It localises to the cytoplasm. The catalysed reaction is L-homoarginine + 2-oxoglutarate + O2 = 6-hydroxy-L-homoarginine + succinate + CO2. It carries out the reaction melatonin + 2-oxoglutarate + O2 = 2-hydroxymelatonin + succinate + CO2. In terms of biological role, 2-oxoglutarate-dependent dioxygenase catalyzing homoarginine 6-hydroxylation thus producing 6-hydroxy-L-homoarginine. Guanidine (Gd) is in turn synthesized by the spontaneous conversion of 6-hydroxy-L-homoarginine to (S)-2-amino-6-oxohexanoate (RHEA:79843); guanidine is a nitrogen-rich compound that can serve as a defense or signaling substance. Involved in melatonin degradation. Catalyzes the hydroxylation of melatonin to produce 2-hydroxymelatonin. The sequence is that of Homoarginine-6-hydroxylase 2-ODD-233 from Oryza sativa subsp. japonica (Rice).